Consider the following 556-residue polypeptide: Formate--tetrahydrofolate ligase (556 aa).

65–72 (TPAGEGKT) contributes to the ATP binding site.

This sequence belongs to the formate--tetrahydrofolate ligase family.

The enzyme catalyses (6S)-5,6,7,8-tetrahydrofolate + formate + ATP = (6R)-10-formyltetrahydrofolate + ADP + phosphate. Its pathway is one-carbon metabolism; tetrahydrofolate interconversion. This is Formate--tetrahydrofolate ligase from Agathobacter rectalis (strain ATCC 33656 / DSM 3377 / JCM 17463 / KCTC 5835 / VPI 0990) (Eubacterium rectale).